The following is a 202-amino-acid chain: MGLWRGKSPLILASQSSARKMLLANAGLEFIAITADIDERGIQAASKLSSPRDIGLLLAREKAKAVSANHPGSHVIGADQTLALGERLFNKPAGRAQAMAQLRDLAGNYHELNSAVAVAHDGKIVFEDVSVARMTMRQMSEAELSAYLDAAGDAVTTSVGAYQLEGLGIHLFERIEGDHFTILGLPLLPLLAFLRSEQLIAV.

The active-site Proton acceptor is the Asp79.

It belongs to the Maf family. A divalent metal cation is required as a cofactor.

The protein localises to the cytoplasm. The catalysed reaction is a ribonucleoside 5'-triphosphate + H2O = a ribonucleoside 5'-phosphate + diphosphate + H(+). It catalyses the reaction a 2'-deoxyribonucleoside 5'-triphosphate + H2O = a 2'-deoxyribonucleoside 5'-phosphate + diphosphate + H(+). Functionally, nucleoside triphosphate pyrophosphatase. May have a dual role in cell division arrest and in preventing the incorporation of modified nucleotides into cellular nucleic acids. This chain is Nucleoside triphosphate pyrophosphatase, found in Bradyrhizobium diazoefficiens (strain JCM 10833 / BCRC 13528 / IAM 13628 / NBRC 14792 / USDA 110).